Reading from the N-terminus, the 319-residue chain is Histone-lysine N-methyltransferase set5 (319 aa).

Residues 4-141 enclose the SET domain; it reads YETEIYKVVP…AGEEILTTYI (138 aa). At S316 the chain carries Phosphoserine. Phosphothreonine is present on T318.

This sequence belongs to the class V-like SAM-binding methyltransferase superfamily.

The protein localises to the nucleus. It is found in the chromosome. It localises to the cytoplasm. The enzyme catalyses L-lysyl-[histone] + S-adenosyl-L-methionine = N(6)-methyl-L-lysyl-[histone] + S-adenosyl-L-homocysteine + H(+). Functionally, histone methyltransferase that monomethylates 'Lys-5', 'Lys-8' and 'Lys-12' of histone H4 (H4K5me1, H4K8me1 and H4K12me1, respectively), thereby controlling gene expression and remodeling chromatin structures. Monomethylation of 'Lys-5' of histone H4 (H4K5me1) is required for subsequent acetylation and formation of N6-acetyl-N6-methyllysine (H4K5acme). This Schizosaccharomyces pombe (strain 972 / ATCC 24843) (Fission yeast) protein is Histone-lysine N-methyltransferase set5 (set5).